A 939-amino-acid polypeptide reads, in one-letter code: Protein translocase subunit SecA (939 aa).

ATP contacts are provided by residues Gln85, 103 to 107, and Asp504; that span reads GEGKT. Positions 850-939 are disordered; it reads PVQDGAERPS…KGGGGRRRKK (90 aa). Over residues 854–864 the composition is skewed to basic and acidic residues; it reads GAERPSLEKEG. Positions 924–939 are enriched in basic residues; the sequence is ERRKAQKGGGGRRRKK.

This sequence belongs to the SecA family. Monomer and homodimer. Part of the essential Sec protein translocation apparatus which comprises SecA, SecYEG and auxiliary proteins SecDF. Other proteins may also be involved.

It is found in the cell membrane. The protein localises to the cytoplasm. It catalyses the reaction ATP + H2O + cellular proteinSide 1 = ADP + phosphate + cellular proteinSide 2.. Part of the Sec protein translocase complex. Interacts with the SecYEG preprotein conducting channel. Has a central role in coupling the hydrolysis of ATP to the transfer of proteins into and across the cell membrane, serving as an ATP-driven molecular motor driving the stepwise translocation of polypeptide chains across the membrane. The sequence is that of Protein translocase subunit SecA from Streptomyces griseus subsp. griseus (strain JCM 4626 / CBS 651.72 / NBRC 13350 / KCC S-0626 / ISP 5235).